The primary structure comprises 473 residues: C3a anaphylatoxin chemotactic receptor (473 aa).

Over Met1–Asp23 the chain is Extracellular. The N-linked (GlcNAc...) asparagine glycan is linked to Asn9. A helical transmembrane segment spans residues Ile24–Trp46. Topologically, residues Val47–Asn57 are cytoplasmic. Residues Thr58–Ala80 traverse the membrane as a helical segment. The Extracellular portion of the chain corresponds to His81–Lys96. A disulfide bridge connects residues Cys95 and Cys172. A helical membrane pass occupies residues Leu97–Leu118. At Asp119–Ala139 the chain is on the cytoplasmic side. A helical membrane pass occupies residues Phe140–Tyr160. Topologically, residues Arg161–Arg329 are extracellular. Sulfotyrosine is present on residues Tyr174 and Tyr184. Asn201 carries N-linked (GlcNAc...) asparagine glycosylation. Positions Phe233–Tyr252 are disordered. Tyr308 is subject to Sulfotyrosine. The chain crosses the membrane as a helical span at residues Leu330 to Val349. Residues Phe350–Arg366 are Cytoplasmic-facing. Residues Val367 to Leu389 traverse the membrane as a helical segment. Over Val390 to Asp406 the chain is Extracellular. Residues His407–Leu427 traverse the membrane as a helical segment. Residues Gly428–Val473 lie on the Cytoplasmic side of the membrane. Ser448 bears the Phosphoserine mark. Thr452 is modified (phosphothreonine).

The protein belongs to the G-protein coupled receptor 1 family. In terms of assembly, interacts with VGF-derived peptide TLQP-21.

Its subcellular location is the cell membrane. Receptor for the chemotactic and inflammatory peptide anaphylatoxin C3a. This receptor stimulates chemotaxis, granule enzyme release and superoxide anion production. This is C3a anaphylatoxin chemotactic receptor (C3ar1) from Rattus norvegicus (Rat).